The sequence spans 197 residues: Neurturin (197 aa).

The first 19 residues, methionine 1–serine 19, serve as a signal peptide directing secretion. A propeptide spanning residues isoleucine 20–arginine 95 is cleaved from the precursor. The interval threonine 74–arginine 93 is disordered. Residues glycine 82–arginine 93 are compositionally biased toward basic residues. Intrachain disulfides connect cysteine 103–cysteine 165, cysteine 130–cysteine 194, and cysteine 134–cysteine 196. Arginine 149, arginine 158, arginine 160, and glutamine 162 together coordinate heparan sulfate group.

This sequence belongs to the TGF-beta family. GDNF subfamily. In terms of assembly, homodimer; disulfide-linked. Interacts with GFRA2 coreceptor and RET: forms a 2:2:2 ternary complex composed of NRTN ligand, GFRA2 and RET receptor. Also forms a 4:4:4 tetrameric complex composed of 4 copies of NRTN ligand, GFRA2 and RET receptor, which prevents endocytosis of RET.

Its subcellular location is the secreted. Functionally, growth factor that supports the survival of sympathetic neurons in culture. May regulate the development and maintenance of the CNS. Involved in the development of the neural crest. Might control the size of non-neuronal cell population such as haemopoietic cells. Acts by binding to its coreceptor, GFRA2, leading to autophosphorylation and activation of the RET receptor. Heparan sulfate-binding is required for signaling. The polypeptide is Neurturin (Homo sapiens (Human)).